We begin with the raw amino-acid sequence, 423 residues long: Putative competence-damage inducible protein (423 aa).

The protein belongs to the CinA family.

The protein is Putative competence-damage inducible protein of Streptococcus pyogenes serotype M49 (strain NZ131).